The primary structure comprises 507 residues: Photosystem II CP47 reaction center protein (507 aa).

The Cytoplasmic segment spans residues 2–16 (GLPWYRVHTVVLNDP). A helical transmembrane segment spans residues 17–39 (GRLISVHLMHTALVAGWAGSMAL). The Lumenal, thylakoid portion of the chain corresponds to 40 to 94 (YELAIFDSSDAVLNPMWRQGMFVLPFMARLGVTSSWNGWSVTGETGLDPGFWSFE). A helical transmembrane segment spans residues 95–116 (GVAAAHIVLSGLLFLAAVWHWV). Topologically, residues 117–134 (FWDLELFVDPRTGESALD) are cytoplasmic. A helical membrane pass occupies residues 135-159 (LPKMFGIHLFLSGLLCFGFGAFHLT). At 160 to 196 (GVWGPGMWVSDPYGLTGHVQPVAPEWGPAGFNPFNPG) the chain is on the lumenal, thylakoid side. The chain crosses the membrane as a helical span at residues 197–218 (GVVAHHIAAGIVGIIAGLFHLT). The Cytoplasmic segment spans residues 219 to 233 (VRPPERLYKALRMGN). A helical transmembrane segment spans residues 234-255 (IETVLSSSIAAVFFAAFVVAGT). Residues 256 to 450 (MWYGNATTPI…GVFRTSPRGW (195 aa)) are Lumenal, thylakoid-facing. The helical transmembrane segment at 451–474 (FTFGHAVFALLFFFGHIWHGSRTL) threads the bilayer. Over 475–507 (FRDVFAGVDPGLEEQVEFGVFAKVGDLSTRKEA) the chain is Cytoplasmic.

This sequence belongs to the PsbB/PsbC family. PsbB subfamily. As to quaternary structure, PSII is composed of 1 copy each of membrane proteins PsbA, PsbB, PsbC, PsbD, PsbE, PsbF, PsbH, PsbI, PsbJ, PsbK, PsbL, PsbM, PsbT, PsbX, Psb30/Ycf12, peripheral proteins PsbO, CyanoQ (PsbQ), PsbU, PsbV and a large number of cofactors. It forms dimeric complexes. Contacts PsbQ. Binds multiple chlorophylls. PSII binds additional chlorophylls, carotenoids and specific lipids. serves as cofactor.

It localises to the cellular thylakoid membrane. Its function is as follows. One of the components of the core complex of photosystem II (PSII). It binds chlorophyll and helps catalyze the primary light-induced photochemical processes of PSII. PSII is a light-driven water:plastoquinone oxidoreductase, using light energy to abstract electrons from H(2)O, generating O(2) and a proton gradient subsequently used for ATP formation. In Synechocystis sp. (strain ATCC 27184 / PCC 6803 / Kazusa), this protein is Photosystem II CP47 reaction center protein.